The primary structure comprises 248 residues: Pyridoxine 5'-phosphate synthase (248 aa).

3-amino-2-oxopropyl phosphate is bound at residue asparagine 12. 14 to 15 (DH) is a binding site for 1-deoxy-D-xylulose 5-phosphate. Arginine 23 contacts 3-amino-2-oxopropyl phosphate. Histidine 48 serves as the catalytic Proton acceptor. Positions 50 and 55 each coordinate 1-deoxy-D-xylulose 5-phosphate. Glutamate 75 (proton acceptor) is an active-site residue. A 1-deoxy-D-xylulose 5-phosphate-binding site is contributed by threonine 105. The active-site Proton donor is the histidine 196. Residues glycine 197 and 218-219 (GH) each bind 3-amino-2-oxopropyl phosphate.

Belongs to the PNP synthase family. In terms of assembly, homooctamer; tetramer of dimers.

The protein resides in the cytoplasm. The catalysed reaction is 3-amino-2-oxopropyl phosphate + 1-deoxy-D-xylulose 5-phosphate = pyridoxine 5'-phosphate + phosphate + 2 H2O + H(+). The protein operates within cofactor biosynthesis; pyridoxine 5'-phosphate biosynthesis; pyridoxine 5'-phosphate from D-erythrose 4-phosphate: step 5/5. In terms of biological role, catalyzes the complicated ring closure reaction between the two acyclic compounds 1-deoxy-D-xylulose-5-phosphate (DXP) and 3-amino-2-oxopropyl phosphate (1-amino-acetone-3-phosphate or AAP) to form pyridoxine 5'-phosphate (PNP) and inorganic phosphate. The chain is Pyridoxine 5'-phosphate synthase from Ectopseudomonas mendocina (strain ymp) (Pseudomonas mendocina).